The primary structure comprises 100 residues: Urease subunit gamma (100 aa).

This sequence belongs to the urease gamma subunit family. Heterotrimer of UreA (gamma), UreB (beta) and UreC (alpha) subunits. Three heterotrimers associate to form the active enzyme.

The protein localises to the cytoplasm. The catalysed reaction is urea + 2 H2O + H(+) = hydrogencarbonate + 2 NH4(+). Its pathway is nitrogen metabolism; urea degradation; CO(2) and NH(3) from urea (urease route): step 1/1. This Actinobacillus pleuropneumoniae (Haemophilus pleuropneumoniae) protein is Urease subunit gamma.